Here is a 258-residue protein sequence, read N- to C-terminus: Pimeloyl-[acyl-carrier protein] methyl ester esterase (258 aa).

Substrate contacts are provided by residues Trp22, 84–85 (SL), and 145–149 (FLAIQ). Ser84 functions as the Nucleophile in the catalytic mechanism. Residues Asp209 and His238 contribute to the active site. His238 lines the substrate pocket.

This sequence belongs to the AB hydrolase superfamily. Carboxylesterase BioH family. Monomer.

The protein resides in the cytoplasm. The enzyme catalyses 6-carboxyhexanoyl-[ACP] methyl ester + H2O = 6-carboxyhexanoyl-[ACP] + methanol + H(+). It functions in the pathway cofactor biosynthesis; biotin biosynthesis. Its function is as follows. The physiological role of BioH is to remove the methyl group introduced by BioC when the pimeloyl moiety is complete. It allows to synthesize pimeloyl-ACP via the fatty acid synthetic pathway through the hydrolysis of the ester bonds of pimeloyl-ACP esters. This is Pimeloyl-[acyl-carrier protein] methyl ester esterase from Pseudoalteromonas atlantica (strain T6c / ATCC BAA-1087).